A 255-amino-acid polypeptide reads, in one-letter code: Geranylgeranylglyceryl phosphate synthase (255 aa).

Residues Asp34 and Thr64 each contribute to the Mg(2+) site. Residues 182–188 (YLEAGSG), 213–214 (GG), and 235–236 (GN) each bind sn-glycerol 1-phosphate.

Belongs to the GGGP/HepGP synthase family. Group II subfamily. The cofactor is Mg(2+).

The protein resides in the cytoplasm. It carries out the reaction sn-glycerol 1-phosphate + (2E,6E,10E)-geranylgeranyl diphosphate = sn-3-O-(geranylgeranyl)glycerol 1-phosphate + diphosphate. The protein operates within membrane lipid metabolism; glycerophospholipid metabolism. Its function is as follows. Prenyltransferase that catalyzes the transfer of the geranylgeranyl moiety of geranylgeranyl diphosphate (GGPP) to the C3 hydroxyl of sn-glycerol-1-phosphate (G1P). This reaction is the first ether-bond-formation step in the biosynthesis of archaeal membrane lipids. The chain is Geranylgeranylglyceryl phosphate synthase from Saccharolobus solfataricus (strain ATCC 35092 / DSM 1617 / JCM 11322 / P2) (Sulfolobus solfataricus).